Reading from the N-terminus, the 72-residue chain is Gene 35 protein (72 aa).

The polypeptide is Gene 35 protein (35) (Mycobacterium phage L5 (Mycobacteriophage L5)).